The primary structure comprises 136 residues: Large ribosomal subunit protein uL16 (136 aa).

This sequence belongs to the universal ribosomal protein uL16 family. In terms of assembly, part of the 50S ribosomal subunit.

Functionally, binds 23S rRNA and is also seen to make contacts with the A and possibly P site tRNAs. This chain is Large ribosomal subunit protein uL16, found in Histophilus somni (strain 129Pt) (Haemophilus somnus).